Here is a 432-residue protein sequence, read N- to C-terminus: Monoacylglycerol lipase ABHD2 (432 aa).

At 1-14 (MNTHESEVYTVAPE) the chain is on the cytoplasmic side. Residues 15–35 (MPAMFDGMKLAAVATVLYVIV) form a helical; Signal-anchor for type II membrane protein membrane-spanning segment. The Extracellular segment spans residues 36–432 (RCLNLKSPTA…NQTTCQENTS (397 aa)). The 252-residue stretch at 132–383 (TMVICPGIGN…HGGHLGFFEG (252 aa)) folds into the AB hydrolase-1 domain. N-linked (GlcNAc...) asparagine glycosylation occurs at Asn141. Catalysis depends on Ser212, which acts as the Nucleophile. An N-linked (GlcNAc...) asparagine glycan is attached at Asn225. Active-site charge relay system residues include Asp346 and His377. The disordered stretch occupies residues 413 to 432 (PPCQSKDAQSNQTTCQENTS). Residues 418–432 (KDAQSNQTTCQENTS) show a composition bias toward polar residues. Asn423 carries an N-linked (GlcNAc...) asparagine glycan.

Belongs to the AB hydrolase superfamily. AB hydrolase 4 family.

The protein localises to the cell membrane. The enzyme catalyses Hydrolyzes glycerol monoesters of long-chain fatty acids.. It carries out the reaction an acetyl ester + H2O = an aliphatic alcohol + acetate + H(+). It catalyses the reaction a triacylglycerol + H2O = a diacylglycerol + a fatty acid + H(+). The catalysed reaction is 2-(5Z,8Z,11Z,14Z-eicosatetraenoyl)-glycerol + H2O = glycerol + (5Z,8Z,11Z,14Z)-eicosatetraenoate + H(+). The enzyme catalyses a butanoate ester + H2O = an aliphatic alcohol + butanoate + H(+). It carries out the reaction hexadecanoate ester + H2O = an aliphatic alcohol + hexadecanoate + H(+). Acylglycerol lipase activity is activated upon binding to progesterone. In terms of biological role, progesterone-dependent acylglycerol lipase that catalyzes hydrolysis of endocannabinoid arachidonoylglycerol (AG) from cell membrane. Acts as a progesterone receptor: progesterone-binding activates the acylglycerol lipase activity, mediating degradation of 1-arachidonoylglycerol (1AG) and 2-arachidonoylglycerol (2AG) to glycerol and arachidonic acid (AA). Also displays an ester hydrolase activity against acetyl ester, butanoate ester and hexadecanoate ester. Plays a key role in sperm capacitation in response to progesterone by mediating degradation of 2AG, an inhibitor of the sperm calcium channel CatSper, leading to calcium influx via CatSper and sperm activation. May also play a role in smooth muscle cells migration. This Danio rerio (Zebrafish) protein is Monoacylglycerol lipase ABHD2 (abhd2a).